We begin with the raw amino-acid sequence, 158 residues long: NAD(P)H-quinone oxidoreductase subunit J, chloroplastic (158 aa).

The protein belongs to the complex I 30 kDa subunit family. NDH is composed of at least 16 different subunits, 5 of which are encoded in the nucleus.

The protein resides in the plastid. It is found in the chloroplast thylakoid membrane. It carries out the reaction a plastoquinone + NADH + (n+1) H(+)(in) = a plastoquinol + NAD(+) + n H(+)(out). The enzyme catalyses a plastoquinone + NADPH + (n+1) H(+)(in) = a plastoquinol + NADP(+) + n H(+)(out). NDH shuttles electrons from NAD(P)H:plastoquinone, via FMN and iron-sulfur (Fe-S) centers, to quinones in the photosynthetic chain and possibly in a chloroplast respiratory chain. The immediate electron acceptor for the enzyme in this species is believed to be plastoquinone. Couples the redox reaction to proton translocation, and thus conserves the redox energy in a proton gradient. The polypeptide is NAD(P)H-quinone oxidoreductase subunit J, chloroplastic (Amborella trichopoda).